A 272-amino-acid chain; its full sequence is Shikimate dehydrogenase (NADP(+)) (272 aa).

Shikimate is bound by residues 20–22 and threonine 67; that span reads TMS. Lysine 71 functions as the Proton acceptor in the catalytic mechanism. Glutamate 83 lines the NADP(+) pocket. The shikimate site is built by asparagine 92 and aspartate 107. NADP(+)-binding positions include 129–133, 153–158, and leucine 216; these read GAGGA and NRTKSK. Tyrosine 218 is a shikimate binding site. Glycine 239 is a binding site for NADP(+).

The protein belongs to the shikimate dehydrogenase family. As to quaternary structure, homodimer.

It catalyses the reaction shikimate + NADP(+) = 3-dehydroshikimate + NADPH + H(+). It participates in metabolic intermediate biosynthesis; chorismate biosynthesis; chorismate from D-erythrose 4-phosphate and phosphoenolpyruvate: step 4/7. Its function is as follows. Involved in the biosynthesis of the chorismate, which leads to the biosynthesis of aromatic amino acids. Catalyzes the reversible NADPH linked reduction of 3-dehydroshikimate (DHSA) to yield shikimate (SA). This chain is Shikimate dehydrogenase (NADP(+)), found in Maridesulfovibrio salexigens (strain ATCC 14822 / DSM 2638 / NCIMB 8403 / VKM B-1763) (Desulfovibrio salexigens).